The following is a 102-amino-acid chain: Large ribosomal subunit protein bL21 (102 aa).

It belongs to the bacterial ribosomal protein bL21 family. As to quaternary structure, part of the 50S ribosomal subunit. Contacts protein L20.

Functionally, this protein binds to 23S rRNA in the presence of protein L20. The chain is Large ribosomal subunit protein bL21 from Listeria monocytogenes serotype 4b (strain CLIP80459).